The following is a 488-amino-acid chain: GTPase Der (488 aa).

2 EngA-type G domains span residues 3–166 (PVIA…PRDP) and 193–366 (IKIA…MSAV). GTP-binding positions include 9-16 (GRPNVGKS), 56-60 (DTGGI), 118-121 (NKID), 199-206 (GRPNVGKS), 246-250 (DTAGV), and 311-314 (NKWD). Residues 367–451 (TRWPTSRLTQ…PIRIEYKGGD (85 aa)) form the KH-like domain. Positions 449 to 461 (GGDNPFEGKKNTL) are enriched in basic and acidic residues. A disordered region spans residues 449-488 (GGDNPFEGKKNTLTDRQVNKKRRLMSHHKKAEKKRRDKRK). Positions 467–488 (NKKRRLMSHHKKAEKKRRDKRK) are enriched in basic residues.

This sequence belongs to the TRAFAC class TrmE-Era-EngA-EngB-Septin-like GTPase superfamily. EngA (Der) GTPase family. In terms of assembly, associates with the 50S ribosomal subunit.

In terms of biological role, GTPase that plays an essential role in the late steps of ribosome biogenesis. The polypeptide is GTPase Der (Pseudomonas entomophila (strain L48)).